Reading from the N-terminus, the 258-residue chain is Acyl-[acyl-carrier-protein]--UDP-N-acetylglucosamine O-acyltransferase (258 aa).

It belongs to the transferase hexapeptide repeat family. LpxA subfamily. In terms of assembly, homotrimer.

It is found in the cytoplasm. It catalyses the reaction a (3R)-hydroxyacyl-[ACP] + UDP-N-acetyl-alpha-D-glucosamine = a UDP-3-O-[(3R)-3-hydroxyacyl]-N-acetyl-alpha-D-glucosamine + holo-[ACP]. It participates in glycolipid biosynthesis; lipid IV(A) biosynthesis; lipid IV(A) from (3R)-3-hydroxytetradecanoyl-[acyl-carrier-protein] and UDP-N-acetyl-alpha-D-glucosamine: step 1/6. In terms of biological role, involved in the biosynthesis of lipid A, a phosphorylated glycolipid that anchors the lipopolysaccharide to the outer membrane of the cell. The sequence is that of Acyl-[acyl-carrier-protein]--UDP-N-acetylglucosamine O-acyltransferase from Stutzerimonas stutzeri (strain A1501) (Pseudomonas stutzeri).